Consider the following 349-residue polypeptide: DNA-directed RNA polymerase subunit alpha (349 aa).

The alpha N-terminal domain (alpha-NTD) stretch occupies residues 1–226 (MLIAQRPTLI…GLFGLAQELN (226 aa)). The alpha C-terminal domain (alpha-CTD) stretch occupies residues 241–349 (AALAADLALP…GAEFIETEQY (109 aa)). The disordered stretch occupies residues 309–349 (KDSPPGFDPRQAVDTYGTDAYSPSFSDPSDDGAEFIETEQY). Acidic residues predominate over residues 336 to 349 (PSDDGAEFIETEQY).

Belongs to the RNA polymerase alpha chain family. In terms of assembly, homodimer. The RNAP catalytic core consists of 2 alpha, 1 beta, 1 beta' and 1 omega subunit. When a sigma factor is associated with the core the holoenzyme is formed, which can initiate transcription.

The catalysed reaction is RNA(n) + a ribonucleoside 5'-triphosphate = RNA(n+1) + diphosphate. DNA-dependent RNA polymerase catalyzes the transcription of DNA into RNA using the four ribonucleoside triphosphates as substrates. In Frankia casuarinae (strain DSM 45818 / CECT 9043 / HFP020203 / CcI3), this protein is DNA-directed RNA polymerase subunit alpha.